A 403-amino-acid polypeptide reads, in one-letter code: Calcium-responsive transactivator (403 aa).

Residues 1-148 are N-terminal auto-inhibitory domain; the sequence is MSVAFASARP…TLPTTTMSMA (148 aa). An SH2-binding motif is present at residues 50 to 53; that stretch reads YQQI. Disordered regions lie at residues 72 to 111, 152 to 171, 224 to 303, and 318 to 403; these read QSLL…ALGS, HGSA…VPMQ, NQSS…RTFE, and SQQQ…NYQQ. 2 stretches are compositionally biased toward polar residues: residues 92-105 and 161-171; these read QTGP…QGNL and TVPSSQNVPMQ. Residues 149 to 238 are methionine-rich intra-molecular domain; it reads VSTHGSAPGY…GSSMMGQRPL (90 aa). Over residues 224-235 the composition is skewed to low complexity; the sequence is NQSSQGSSMMGQ. The segment at 252–324 is MFD domain; the sequence is YLGQEEYYSE…AQYSQQQTGY (73 aa). Residues 263 to 277 are compositionally biased toward polar residues; the sequence is YGHSQGSSEAMTPQY. A compositionally biased stretch (low complexity) spans 286 to 296; sequence YSYQQSSYGEQ. The interval 341–403 is necessary for nuclear localization; sequence NQQNYPGQQQ…EQGQYGNYQQ (63 aa). The SH2-binding signature appears at 360–363; sequence SQYS. Residues 378–386 carry the SH3-binding motif; sequence TSQTTSTAQ. Residues 398-401 carry the SH2-binding motif; that stretch reads YGNY.

It belongs to the SS18 family. As to quaternary structure, homodimer.

Its subcellular location is the nucleus. In terms of biological role, transcriptional activator which may be required for calcium-dependent dendritic growth and branching in cortical neurons. The chain is Calcium-responsive transactivator (ss18l1) from Xenopus laevis (African clawed frog).